The following is a 420-amino-acid chain: Tyrosine--tRNA ligase (420 aa).

An L-tyrosine-binding site is contributed by Y33. The short motif at 38-47 (PTADSLHIGH) is the 'HIGH' region element. Y168 and Q172 together coordinate L-tyrosine. Residues 231 to 235 (KFGKT) carry the 'KMSKS' region motif. K234 contacts ATP. The S4 RNA-binding domain maps to 353 to 419 (MLLVDALIKV…GKKNYYLVKL (67 aa)).

This sequence belongs to the class-I aminoacyl-tRNA synthetase family. TyrS type 1 subfamily. In terms of assembly, homodimer.

It is found in the cytoplasm. It catalyses the reaction tRNA(Tyr) + L-tyrosine + ATP = L-tyrosyl-tRNA(Tyr) + AMP + diphosphate + H(+). Its function is as follows. Catalyzes the attachment of tyrosine to tRNA(Tyr) in a two-step reaction: tyrosine is first activated by ATP to form Tyr-AMP and then transferred to the acceptor end of tRNA(Tyr). The polypeptide is Tyrosine--tRNA ligase (Desulfitobacterium hafniense (strain DSM 10664 / DCB-2)).